We begin with the raw amino-acid sequence, 115 residues long: DNA-binding protein APE_1087b (115 aa).

It belongs to the PDCD5 family.

This chain is DNA-binding protein APE_1087b, found in Aeropyrum pernix (strain ATCC 700893 / DSM 11879 / JCM 9820 / NBRC 100138 / K1).